The primary structure comprises 466 residues: Acetylcholine-gated chloride channel subunit acc-1 (466 aa).

The first 24 residues, 1–24, serve as a signal peptide directing secretion; it reads MSHPGWIMVSFLTELLSQSSKGIA. At 25 to 242 the chain is on the extracellular side; it reads QSLDNCANDT…FVFERRYGWY (218 aa). 3 N-linked (GlcNAc...) asparagine glycosylation sites follow: N32, N102, and N143. A disulfide bridge connects residues C158 and C172. An N-linked (GlcNAc...) asparagine glycan is attached at N211. The helical transmembrane segment at 243–263 threads the bilayer; it reads VLQGYIPTMVTIVISWISFYL. Residues 264–272 lie on the Cytoplasmic side of the membrane; it reads GPRAIPART. The helical transmembrane segment at 273–290 threads the bilayer; sequence MLGVNSLLAMTFQFGNII. Residues 291–304 lie on the Extracellular side of the membrane; it reads RNLPRVSYVKAIDV. Residues 305-325 form a helical membrane-spanning segment; sequence WMLSGMLFIFLSLLELAVVGF. Over 326–427 the chain is Cytoplasmic; the sequence is MSRNEGLPPK…MRELRPETVD (102 aa). The tract at residues 333 to 352 is disordered; the sequence is PPKVKKRKRQEDDDEGFSWK. The chain crosses the membrane as a helical span at residues 428-448; that stretch reads FYSAIFFPTAYMLFNISYWSF. The Extracellular portion of the chain corresponds to 449–466; sequence YLTSLSEYFDEDVNIDQP.

This sequence belongs to the ligand-gated ion channel (TC 1.A.9) family. As to quaternary structure, homopentamer (in vitro). Forms heteropentamers composed of acc-1 and acc-4 or acc-1 and acc-3. Both homopentamers and heteropentamers form functional ion channels. As to expression, expressed in a subset of cholinergic motor neurons including cholinergic motor neurons in the ventral cord, the retrovesicular ganglion and in head neurons such as the SMD, RMD motor neurons, the AVA and AVE command interneurons and the SAA neurons. Also expressed in a small number of glutamatergic neurons including the pharyngeal neurons MI and M3, the PLM neurons and a pair of neurons in the lateral ganglion.

The protein localises to the cell membrane. In terms of biological role, acetylcholine-gated chloride channel subunit. Forms functional homopentameric (in vitro) and functional heteropentameric ion channels with acc-3 and acc-4 ion channel subunits. Currents in channels are triggered in response to acetylcholine, but not in response to GABA, glutamate, glycine, histamine or dopamine. This chain is Acetylcholine-gated chloride channel subunit acc-1, found in Caenorhabditis elegans.